The sequence spans 104 residues: MSEFSNVTVVKEANIFFDGGVTSRTIIFSSGSKKTLGIMMPGEYVFNTAGAELMEILSGDLEVQIAGIDSWKPVKGGESFEVPASSSFRMKVKTVTDYCCSFLA.

It belongs to the nucleoside phosphorylase PpnP family.

The catalysed reaction is a purine D-ribonucleoside + phosphate = a purine nucleobase + alpha-D-ribose 1-phosphate. The enzyme catalyses adenosine + phosphate = alpha-D-ribose 1-phosphate + adenine. It catalyses the reaction cytidine + phosphate = cytosine + alpha-D-ribose 1-phosphate. It carries out the reaction guanosine + phosphate = alpha-D-ribose 1-phosphate + guanine. The catalysed reaction is inosine + phosphate = alpha-D-ribose 1-phosphate + hypoxanthine. The enzyme catalyses thymidine + phosphate = 2-deoxy-alpha-D-ribose 1-phosphate + thymine. It catalyses the reaction uridine + phosphate = alpha-D-ribose 1-phosphate + uracil. It carries out the reaction xanthosine + phosphate = alpha-D-ribose 1-phosphate + xanthine. Functionally, catalyzes the phosphorolysis of diverse nucleosides, yielding D-ribose 1-phosphate and the respective free bases. Can use uridine, adenosine, guanosine, cytidine, thymidine, inosine and xanthosine as substrates. Also catalyzes the reverse reactions. The sequence is that of Pyrimidine/purine nucleoside phosphorylase from Geotalea daltonii (strain DSM 22248 / JCM 15807 / FRC-32) (Geobacter daltonii).